Here is a 98-residue protein sequence, read N- to C-terminus: Integration host factor subunit alpha (98 aa).

A disordered region spans residues 52-73 (FDLRQKSERPGRNPKTGEDIPI). Positions 54–73 (LRQKSERPGRNPKTGEDIPI) are enriched in basic and acidic residues.

The protein belongs to the bacterial histone-like protein family. As to quaternary structure, heterodimer of an alpha and a beta chain.

In terms of biological role, this protein is one of the two subunits of integration host factor, a specific DNA-binding protein that functions in genetic recombination as well as in transcriptional and translational control. This Pseudoalteromonas atlantica (strain T6c / ATCC BAA-1087) protein is Integration host factor subunit alpha.